Consider the following 1225-residue polypeptide: Structural maintenance of chromosomes protein 1 (1225 aa).

Residue 33–40 (GPNGSGKS) participates in ATP binding. Positions 173–489 (SGSIQYKKEY…SANNQEYDLN (317 aa)) form a coiled coil. Residues 527 to 641 (PGVKGLVHDL…CNTLNIAKDL (115 aa)) form the SMC hinge domain. A coiled-coil region spans residues 679–1063 (KEEYQSLMSL…LKIKKKRKEL (385 aa)). Residues 1057 to 1061 (KKKRK) carry the Nuclear localization signal motif.

It belongs to the SMC family. SMC1 subfamily. In terms of assembly, cohesin complexes are composed of the SMC1 and SMC3 heterodimer attached via their SMC hinge domain, MCD1/SCC1 which link them, and IRR1/SCC3, which interacts with MCD1. The cohesin complex also interacts with SCC2, which is required for its association with chromosomes.

Its subcellular location is the nucleus. It localises to the chromosome. Involved in chromosome cohesion during cell cycle and in DNA repair. Central component of cohesin complex. The cohesin complex is required for the cohesion of sister chromatids after DNA replication. The cohesin complex apparently forms a large proteinaceous ring within which sister chromatids can be trapped. At anaphase, the complex is cleaved and dissociates from chromatin, allowing sister chromatids to segregate. This chain is Structural maintenance of chromosomes protein 1 (SMC1), found in Saccharomyces cerevisiae (strain ATCC 204508 / S288c) (Baker's yeast).